Here is a 150-residue protein sequence, read N- to C-terminus: UPF0756 membrane protein APL_0366 (150 aa).

The next 4 helical transmembrane spans lie at Leu-12–Leu-34, His-52–Gly-72, Phe-82–Gly-102, and Ile-123–Leu-143.

It belongs to the UPF0756 family.

It is found in the cell membrane. This chain is UPF0756 membrane protein APL_0366, found in Actinobacillus pleuropneumoniae serotype 5b (strain L20).